Here is a 315-residue protein sequence, read N- to C-terminus: Methionyl-tRNA formyltransferase (315 aa).

Serine 113–proline 116 contributes to the (6S)-5,6,7,8-tetrahydrofolate binding site.

Belongs to the Fmt family.

It catalyses the reaction L-methionyl-tRNA(fMet) + (6R)-10-formyltetrahydrofolate = N-formyl-L-methionyl-tRNA(fMet) + (6S)-5,6,7,8-tetrahydrofolate + H(+). Functionally, attaches a formyl group to the free amino group of methionyl-tRNA(fMet). The formyl group appears to play a dual role in the initiator identity of N-formylmethionyl-tRNA by promoting its recognition by IF2 and preventing the misappropriation of this tRNA by the elongation apparatus. The protein is Methionyl-tRNA formyltransferase of Photorhabdus laumondii subsp. laumondii (strain DSM 15139 / CIP 105565 / TT01) (Photorhabdus luminescens subsp. laumondii).